The following is a 361-amino-acid chain: Phospho-N-acetylmuramoyl-pentapeptide-transferase (361 aa).

10 helical membrane passes run 26 to 46 (SILAALTALFLSLWIGPVLIQ), 73 to 93 (TMGGSLILMTVTLSVLLWGDL), 98 to 118 (VWLVLVVMLAFGAIGWYDDWI), 139 to 159 (IFGLAAGLFLYFTADVPAAVT), 168 to 188 (IALPLTSISFVAITYFWIVGF), 200 to 220 (GLAIMPTVLVACALGVFAYAS), 237 to 257 (AGDLIIICAAIAGAGLGFLWF), 264 to 284 (VFMGDIGALALGAVLGTIAVI), 289 to 309 (LVLVVMGGVFVIETLSVIIQV), and 339 to 359 (VIVRFWIISVVLVLVGLATLK).

It belongs to the glycosyltransferase 4 family. MraY subfamily. Mg(2+) serves as cofactor.

The protein resides in the cell inner membrane. It carries out the reaction UDP-N-acetyl-alpha-D-muramoyl-L-alanyl-gamma-D-glutamyl-meso-2,6-diaminopimeloyl-D-alanyl-D-alanine + di-trans,octa-cis-undecaprenyl phosphate = di-trans,octa-cis-undecaprenyl diphospho-N-acetyl-alpha-D-muramoyl-L-alanyl-D-glutamyl-meso-2,6-diaminopimeloyl-D-alanyl-D-alanine + UMP. It participates in cell wall biogenesis; peptidoglycan biosynthesis. Functionally, catalyzes the initial step of the lipid cycle reactions in the biosynthesis of the cell wall peptidoglycan: transfers peptidoglycan precursor phospho-MurNAc-pentapeptide from UDP-MurNAc-pentapeptide onto the lipid carrier undecaprenyl phosphate, yielding undecaprenyl-pyrophosphoryl-MurNAc-pentapeptide, known as lipid I. In Xylella fastidiosa (strain M12), this protein is Phospho-N-acetylmuramoyl-pentapeptide-transferase.